A 273-amino-acid polypeptide reads, in one-letter code: Tryptase (273 aa).

The signal sequence occupies residues methionine 1 to alanine 18. A propeptide spans alanine 19–glycine 28 (activation peptide). Residues isoleucine 29 to proline 270 form the Peptidase S1 domain. Asparagine 49 carries an N-linked (GlcNAc...) asparagine glycan. Cysteine 57 and cysteine 73 form a disulfide bridge. Active-site charge relay system residues include histidine 72 and aspartate 119. Residue asparagine 130 is glycosylated (N-linked (GlcNAc...) asparagine). Cystine bridges form between cysteine 153–cysteine 228, cysteine 186–cysteine 209, and cysteine 218–cysteine 246. Catalysis depends on serine 222, which acts as the Charge relay system.

The protein belongs to the peptidase S1 family. Tryptase subfamily.

It carries out the reaction Preferential cleavage: Arg-|-Xaa, Lys-|-Xaa, but with more restricted specificity than trypsin.. Its function is as follows. Tryptase is the major neutral protease present in mast cells and is secreted upon the coupled activation-degranulation response of this cell type. May play a role in innate immunity. The protein is Tryptase (Tpsab1) of Mus musculus (Mouse).